The chain runs to 741 residues: NAD(P)H-quinone oxidoreductase subunit 5, chloroplastic (741 aa).

Helical transmembrane passes span 9 to 29, 40 to 60, 89 to 109, 125 to 145, 147 to 167, 185 to 205, 219 to 239, 258 to 278, 289 to 311, 327 to 347, 354 to 374, 396 to 416, 425 to 445, 549 to 569, 605 to 625, and 721 to 741; these read WIIP…LLLF, WAFQ…NLSI, IDPL…LVLI, FAYM…SNLI, IYIF…FWFT, GDFG…SFEF, NQVN…GAIA, TPIS…FLVA, HIMN…LALA, LGYM…FHLI, ALLF…VGYC, NSFL…CFWS, WLYS…TAFY, LFPI…GIPL, LFSV…YKPV, and YLFF…FLNL.

This sequence belongs to the complex I subunit 5 family. In terms of assembly, NDH is composed of at least 16 different subunits, 5 of which are encoded in the nucleus.

The protein resides in the plastid. Its subcellular location is the chloroplast thylakoid membrane. It carries out the reaction a plastoquinone + NADH + (n+1) H(+)(in) = a plastoquinol + NAD(+) + n H(+)(out). The enzyme catalyses a plastoquinone + NADPH + (n+1) H(+)(in) = a plastoquinol + NADP(+) + n H(+)(out). Functionally, NDH shuttles electrons from NAD(P)H:plastoquinone, via FMN and iron-sulfur (Fe-S) centers, to quinones in the photosynthetic chain and possibly in a chloroplast respiratory chain. The immediate electron acceptor for the enzyme in this species is believed to be plastoquinone. Couples the redox reaction to proton translocation, and thus conserves the redox energy in a proton gradient. The chain is NAD(P)H-quinone oxidoreductase subunit 5, chloroplastic (ndhF) from Symphyotrichum cordifolium (Heart-leaved aster).